The sequence spans 981 residues: uncharacterized protein (981 aa).

The 78-residue stretch at 535–612 folds into the Carrier domain; that stretch reads VLLNPVAIEI…SIASIIQKKS (78 aa). O-(pantetheine 4'-phosphoryl)serine is present on S571.

Belongs to the ATP-dependent AMP-binding enzyme family.

This is an uncharacterized protein from Schizosaccharomyces pombe (strain 972 / ATCC 24843) (Fission yeast).